An 801-amino-acid polypeptide reads, in one-letter code: Vacuolar transporter chaperone complex subunit 4 (801 aa).

The Cytoplasmic segment spans residues 1–692 (MPFSKAWRSA…MLKWTEHATR (692 aa)). ATP-binding residues include Lys215, Arg286, Arg288, Lys312, Lys325, and Arg391. Glu441 is a binding site for Mn(2+). Lys473 is an active-site residue. A helical membrane pass occupies residues 693 to 713 (LGLVGLGVIQFGNSMTLPGDV). Residues 714-723 (TQLSSFWRAN) lie on the Vacuolar side of the membrane. Residues 724 to 744 (FHIVLGIALVLVALMTLMYAL) form a helical membrane-spanning segment. At 745-768 (MTFKARSRRVYARKKIRFDDSWGP) the chain is on the cytoplasmic side. The helical transmembrane segment at 769–789 (TVLTVFLAFGICVIAMMHILG) threads the bilayer. Topologically, residues 790 to 801 (RYGPMLTGDDNF) are vacuolar.

The protein belongs to the VTC4 family. In terms of assembly, the VTC core complex is an integral membrane heterooligomer composed of at least the catalytic subunit vtc4 and the accessory subunits vtc1 and vtc2. vtc1 is a small membrane protein without hydrophilic domain. Vtc2 and vtc4 are related and have 2 hydrophilic domains that face the cytosol, an N-terminal SPX domain and the central core domain. The central core in vtc4 is the catalytic domain. Mn(2+) serves as cofactor.

The protein localises to the acidocalcisome membrane. It carries out the reaction [phosphate](n) + ATP = [phosphate](n+1) + ADP. Activity of the enzyme is Mn(2+)-dependent and enhanced in the presence of pyrophosphate (PPi). Functionally, component of a polyphosphate synthase complex that utilizes ATP to synthesize and translocate polyphosphate to acidocalcisomes in epimastigotes, insect-stages of Trypanosoma brucei. Catalytic subunit of the vacuolar transporter chaperone (VTC) complex. The VTC complex acts as a vacuolar polyphosphate polymerase that catalyzes the synthesis of inorganic polyphosphate (polyP) via transfer of phosphate from ATP to a growing polyP chain, releasing ADP. VTC exposes its catalytic domain vtc4 to the cytosol, where the growing polyP chain winds through a tunnel-shaped pocket, integrating cytoplasmic polymer synthesis with polyP membrane translocation. The VTC complex carries 9 vacuolar transmembrane domains, which are likely to constitute the translocation channel into the organelle lumen. PolyP synthesis is tightly coupled to its transport into the vacuole lumen, in order to avoid otherwise toxic intermediates in the cytosol, and it depends on the proton gradient across the membrane, formed by V-ATPase. The VTC complex also plays a role in vacuolar membrane fusion. Essential for infection and parasite survival in the mammalian host. This Trypanosoma cruzi (strain CL Brener) protein is Vacuolar transporter chaperone complex subunit 4.